We begin with the raw amino-acid sequence, 502 residues long: L-ornithine N(5)-monooxygenase (502 aa).

A compositionally biased stretch (basic and acidic residues) spans 1–10; the sequence is MEPVERKLEI. A disordered region spans residues 1–34; the sequence is MEPVERKLEIGSRSYSKMPLTQQRSSGEPPRLKA. The segment covering 13–26 has biased composition (polar residues); that stretch reads RSYSKMPLTQQRSS. FAD is bound by residues 83–91 and glutamine 102; that span reads ERQKQFAWH. Lysine 107 serves as a coordination point for substrate. Valine 168 lines the FAD pocket. NADP(+) is bound by residues 254–257 and arginine 279; that span reads SGQS. Residues 293–296 and asparagine 323 contribute to the substrate site; that span reads NEVF. An NADP(+)-binding site is contributed by 323–325; sequence NYS. FAD is bound at residue 466–468; that stretch reads SLL. Serine 469 contributes to the substrate binding site.

It belongs to the lysine N(6)-hydroxylase/L-ornithine N(5)-oxygenase family. As to quaternary structure, homotetramer. Requires FAD as cofactor.

It carries out the reaction L-ornithine + NADPH + O2 = N(5)-hydroxy-L-ornithine + NADP(+) + H2O. The catalysed reaction is L-ornithine + NADH + O2 = N(5)-hydroxy-L-ornithine + NAD(+) + H2O. Its pathway is siderophore biosynthesis. Its function is as follows. Catalyzes the conversion of L-ornithine to N(5)-hydroxyornithine, the first step in the biosynthesis of all hydroxamate-containing siderophores, such as deferriferrichrysin. In Aspergillus oryzae (strain ATCC 42149 / RIB 40) (Yellow koji mold), this protein is L-ornithine N(5)-monooxygenase.